Reading from the N-terminus, the 287-residue chain is Hydroxysteroid 11-beta-dehydrogenase 1-like protein (287 aa).

An N-terminal signal peptide occupies residues 1 to 20 (MMKPFGKVLCAAGSLAVLLA). Residues 41 to 67 (GASAGIGEQMAYHYATFGAEIVLTARR), 92 to 93 (DM), and 119 to 121 (NHI) each bind NADP(+). Ser170 contacts substrate. Tyr183 acts as the Proton acceptor in catalysis. NADP(+)-binding positions include 183-187 (YSATK) and 216-222 (GLIDTDA).

Belongs to the short-chain dehydrogenases/reductases (SDR) family.

It localises to the secreted. It catalyses the reaction cortisone + NADPH + H(+) = cortisol + NADP(+). In terms of biological role, unidirectional NADP(+)-dependent cortisol dehydrogenase (in vitro). In Gallus gallus (Chicken), this protein is Hydroxysteroid 11-beta-dehydrogenase 1-like protein (HSD11B1L).